The sequence spans 194 residues: Yellow fluorescent protein (194 aa).

2 Lumazine-binding repeats span residues 1-98 (MFKG…SGGH) and 99-194 (ILSA…NQCW). 179-183 (KVNVE) contacts FMN.

In terms of assembly, homodimer. The cofactor is FMN.

Functionally, antenna protein that modulates the color of the bioluminescence emission of the luciferase. In the presence of YFP and only at temperatures below 20 degrees Celsius, luciferase exhibits a bimodal emission spectrum with a new peak at 545 nM (yellow), in addition to the one at 485 nM. The chain is Yellow fluorescent protein (luxY) from Aliivibrio fischeri (Vibrio fischeri).